A 465-amino-acid polypeptide reads, in one-letter code: Presenilin spe-4 (465 aa).

Topologically, residues 1–18 (MDTLRSISSELVRSSQLR) are cytoplasmic. The helical transmembrane segment at 19–39 (WTLFSVIANMSLTLSIWIGVY) threads the bilayer. The Lumenal portion of the chain corresponds to 40 to 71 (NMEVNSELSKTYFLDPSFEQTTGNLLLDGFIN). Residues 72 to 92 (GVGTILVLGCVSFIMLAFVLF) traverse the membrane as a helical segment. At 93–96 (DFRR) the chain is on the cytoplasmic side. Residues 97-117 (IVKAWLTLSCLLILFGVSAQT) form a helical membrane-spanning segment. At 118–136 (LHDMFSQVFDQDDNNQYYM) the chain is on the lumenal side. Residues 137–157 (TIVLIVVPTVVYGFGGIYAFF) form a helical membrane-spanning segment. Residues 158–160 (SNS) are Cytoplasmic-facing. A helical transmembrane segment spans residues 161-181 (SLILHQIFVVTNCSLISVFYL). Residues 182–190 (RVFPSKTTW) lie on the Lumenal side of the membrane. A helical membrane pass occupies residues 191–211 (FVLWIVLFWDLFAVLAPMGPL). Residue Asp200 is part of the active site. Residues 212–389 (KKVQEKASDY…DALNDGEVLR (178 aa)) lie on the Cytoplasmic side of the membrane. The interval 287 to 356 (INPDSVPTEH…SDISTAEECD (70 aa)) is disordered. Residues 326–350 (SETSSGSSNLSSSDSSTTVSTSDIS) show a composition bias toward low complexity. A helical membrane pass occupies residues 390–410 (LGFGDFVFYSLLIGQAAASGC). Asp394 is an active-site residue. Position 411 (Pro411) is a topological domain, lumenal. The chain crosses the membrane as a helical span at residues 412-432 (FAVISAALGILFGLVVTLTVF). The Cytoplasmic portion of the chain corresponds to 433–439 (STEESTT). Positions 440 to 442 (PAL) match the PAL motif. Residues 440-460 (PALPLPVICGTFCYFSSMFFW) constitute an intramembrane region (helical). Residues 461–465 (EQLYG) are Cytoplasmic-facing.

Belongs to the peptidase A22A family. In terms of assembly, homodimer. Potential component of the gamma-secretase complex, a complex probably composed of the presenilin homodimer (sel-12, hop-1 or spe-4), nicastrin (aph-2), aph-1 and pen-2.

The protein localises to the endoplasmic reticulum membrane. The protein resides in the golgi apparatus. Its subcellular location is the cis-Golgi network membrane. Its function is as follows. Potential catalytic subunit of the gamma-secretase complex during spermatogenesis, an endoprotease complex that catalyzes the intramembrane cleavage of integral membrane proteins such as Notch receptors (lin-12 or glp-1). Involved in spermatid formation during meiosis II. May be required for proper localization of macromolecules that are subject to asymmetric partitioning during spermatogenesis. In Caenorhabditis elegans, this protein is Presenilin spe-4.